Consider the following 685-residue polypeptide: Small ribosomal subunit protein mS39 (685 aa).

A mitochondrion-targeting transit peptide spans Met-1–Arg-10. Residue Lys-127 is modified to N6-acetyllysine. PPR repeat units follow at residues Ile-150–Val-184, Ser-185–Glu-220, Asn-254–Ala-288, Asp-289–Pro-329, Asn-330–Pro-366, Ser-367–Pro-407, Asp-412–Lys-446, Arg-454–Pro-488, His-489–Phe-523, and Pro-572–Pro-606. The segment at Leu-663 to Lys-685 is disordered. Acidic residues predominate over residues Ser-676–Lys-685.

This sequence belongs to the mitochondrion-specific ribosomal protein mS39 family. In terms of assembly, component of the mitochondrial ribosome small subunit (28S) which comprises a 12S rRNA and about 30 distinct proteins. Associated with the 12S mitochondrial rRNA (12S mt-rRNA).

It localises to the mitochondrion. In terms of biological role, mitochondrial RNA-binding protein that has a role in mitochondrial translation. This chain is Small ribosomal subunit protein mS39 (Ptcd3), found in Mus musculus (Mouse).